Here is a 131-residue protein sequence, read N- to C-terminus: Glycine cleavage system H protein (131 aa).

One can recognise a Lipoyl-binding domain in the interval 24–106 (RVTVGISDHA…YGDGWMYVVE (83 aa)). K65 carries the N6-lipoyllysine modification.

This sequence belongs to the GcvH family. As to quaternary structure, the glycine cleavage system is composed of four proteins: P, T, L and H. (R)-lipoate is required as a cofactor.

In terms of biological role, the glycine cleavage system catalyzes the degradation of glycine. The H protein shuttles the methylamine group of glycine from the P protein to the T protein. This Stenotrophomonas maltophilia (strain R551-3) protein is Glycine cleavage system H protein.